The sequence spans 157 residues: Large ribosomal subunit protein uL13m (157 aa).

The N-terminal 29 residues, 1 to 29 (MSTLNGQTALAYAKVWHHVSAKNVPLGRL), are a transit peptide targeting the mitochondrion.

It belongs to the universal ribosomal protein uL13 family. Component of the mitochondrial large ribosomal subunit (mt-LSU). Mature yeast 74S mitochondrial ribosomes consist of a small (37S) and a large (54S) subunit. The 37S small subunit contains a 15S ribosomal RNA (15S mt-rRNA) and at least 32 different proteins. The 54S large subunit contains a 21S rRNA (21S mt-rRNA) and at least 45 different proteins.

The protein localises to the mitochondrion. Its function is as follows. Component of the mitochondrial ribosome (mitoribosome), a dedicated translation machinery responsible for the synthesis of mitochondrial genome-encoded proteins, including at least some of the essential transmembrane subunits of the mitochondrial respiratory chain. The mitoribosomes are attached to the mitochondrial inner membrane and translation products are cotranslationally integrated into the membrane. This Schizosaccharomyces pombe (strain 972 / ATCC 24843) (Fission yeast) protein is Large ribosomal subunit protein uL13m.